A 194-amino-acid chain; its full sequence is Protein DROOPING LEAF (194 aa).

The C4-type zinc-finger motif lies at 15–42; it reads CTYCNTVLAVGVPCKRLMDTVTVKCGHC. Positions 83–103 are disordered; the sequence is LVSPTSNEGSPRAPFVVKPPE.

This sequence belongs to the YABBY family.

It localises to the nucleus. Its function is as follows. Regulates carpel specification in flower development. Severe or intermediate mutation in DL causes complete or partial homeotic conversion of carpels into stamens without affecting the identities of other floral organs. Interacts antagonistically with class B genes and controls floral meristem determinacy. Regulates midrib formation in leaves probably by inducing cell proliferation in the central region of the leaf. The sequence is that of Protein DROOPING LEAF (DL) from Oryza sativa subsp. japonica (Rice).